An 830-amino-acid chain; its full sequence is Serine/threonine-protein kinase pkn2 (830 aa).

The Cytoplasmic portion of the chain corresponds to 1–605; it reads MLAPDSLVLD…GELLRQRRRE (605 aa). Positions 13–283 constitute a Protein kinase domain; that stretch reads FRVLRPLGSG…DALAAAHSAL (271 aa). Residues 19–27 and Lys-42 each bind ATP; that span reads LGSGGMGEV. Asp-135 functions as the Proton acceptor in the catalytic mechanism. The disordered stretch occupies residues 296–326; the sequence is VPQPGSGATPSSGTSVFGTGSASGSSSGPTG. A compositionally biased stretch (low complexity) spans 299-326; the sequence is PGSGATPSSGTSVFGTGSASGSSSGPTG. Residues 396–511 enclose the Guanylate cyclase domain; sequence TVMLTDIQGF…EPMEVIEAVE (116 aa). The chain crosses the membrane as a helical span at residues 606–623; that stretch reads AALVAGAVVLLGAGAAWL. The Periplasmic portion of the chain corresponds to 624–830; it reads SQRNDAGTRA…AIKSLKQKSD (207 aa).

It belongs to the protein kinase superfamily. Ser/Thr protein kinase family.

The protein localises to the cell membrane. It carries out the reaction L-seryl-[protein] + ATP = O-phospho-L-seryl-[protein] + ADP + H(+). It catalyses the reaction L-threonyl-[protein] + ATP = O-phospho-L-threonyl-[protein] + ADP + H(+). Its function is as follows. Regulates the activity of endogenous beta-lactamase or related enzymes, by blocking their secretion by phosphorylation, in response to an external signal yet to be identified. The sequence is that of Serine/threonine-protein kinase pkn2 (pkn2) from Myxococcus xanthus.